We begin with the raw amino-acid sequence, 578 residues long: MNKKYFKKYSWVLILSTSILAPMTLASCNHNVAKKEDKTQNDSSNLSNKTNKSDPNDHLKDKDKNVSQDNKDSTNKAVSNENSQTQSQKTNESSQNTKDDSSKTSNLITNQNSSSNTKSKIQENKQSQKDQNTSAVNVSALEKQTKNDENISLVNSKDTNVILKNDEKVALAKDDSKEKSKNSSNLNLKTPVENRQNKNEVKDDKKALQWWQKLNESASILESFSYDQTSLSLTFKEGMPLGLEVVLKLENLDSHEEKEISFKTTNGKVQNVLLTSSNLTSGKWKIKSFSFDKTYSHSPTIETTFDFKTNEKLKQERIEKIQKAIDKYQIKIKQNYKDKPLISKYALSNFDLNLNFKDLEIVNNSLKFDGSNLNQDLKSEKQMKITFEKVSENQANKTRKAHFKITTLDNLVFEKTLEWSYKTNKEYLDEFKNGSALWDDLQASLTSVFEKSLWHPYQLPKAKSKINTINLINDVSASFQGYDYLDDFNGSAKLKFKLQRGQEQRDITFTINGFLKVSLIDPLYKGNLRNSEFDVKASSNGYWLGQYYTAAEVFKHYSNGKSYWYATANDGNPWLEFS.

Positions 1 to 27 are cleaved as a signal peptide; it reads MNKKYFKKYSWVLILSTSILAPMTLAS. Cys-28 carries the N-palmitoyl cysteine lipid modification. Residue Cys-28 is the site of S-diacylglycerol cysteine attachment. Disordered stretches follow at residues 35–135 and 172–203; these read KEDK…NTSA and AKDD…EVKD. Residues 41-50 are compositionally biased toward polar residues; that stretch reads NDSSNLSNKT. A compositionally biased stretch (basic and acidic residues) spans 51 to 74; it reads NKSDPNDHLKDKDKNVSQDNKDST. A compositionally biased stretch (polar residues) spans 75 to 96; that stretch reads NKAVSNENSQTQSQKTNESSQN. The span at 108-119 shows a compositional bias: low complexity; it reads ITNQNSSSNTKS. The span at 172–181 shows a compositional bias: basic and acidic residues; it reads AKDDSKEKSK.

This sequence belongs to the M.pulmonis LipAB lipoprotein family.

The protein resides in the cell membrane. The chain is Lipoprotein A (lipA) from Mycoplasmopsis pulmonis (strain UAB CTIP) (Mycoplasma pulmonis).